A 172-amino-acid polypeptide reads, in one-letter code: Acetolactate synthase small subunit (172 aa).

Residues Thr4–Glu78 form the ACT domain.

The protein belongs to the acetolactate synthase small subunit family. As to quaternary structure, dimer of large and small chains.

The enzyme catalyses 2 pyruvate + H(+) = (2S)-2-acetolactate + CO2. It participates in amino-acid biosynthesis; L-isoleucine biosynthesis; L-isoleucine from 2-oxobutanoate: step 1/4. It functions in the pathway amino-acid biosynthesis; L-valine biosynthesis; L-valine from pyruvate: step 1/4. The protein is Acetolactate synthase small subunit (ilvH) of Synechocystis sp. (strain ATCC 27184 / PCC 6803 / Kazusa).